The chain runs to 520 residues: Retinoic acid receptor RXR-beta (520 aa).

The disordered stretch occupies residues 1-167 (MSWATRPPFL…GGSGPPEDVK (167 aa)). The interval 1–191 (MSWATRPPFL…PGGPGAGKRL (191 aa)) is modulating. The residue at position 25 (Arg-25) is an Omega-N-methylarginine. Positions 64–79 (EAGRDGMGDSGRDSRS) are enriched in basic and acidic residues. Residues 95–118 (SSPPGPPLTPSAPPPPMPPPPLGS) show a composition bias toward pro residues. The span at 119 to 130 (PFPVISSSMGSP) shows a compositional bias: low complexity. Residues 131-140 (GLPPPAPPGF) show a composition bias toward pro residues. 2 consecutive NR C4-type zinc fingers follow at residues 192–212 (CAIC…CEGC) and 228–252 (CRDN…YQKC). Positions 192-257 (CAICGDRSSG…RYQKCLATGM (66 aa)) form a DNA-binding region, nuclear receptor. Positions 258 to 382 (KREAVQEERQ…HRSIDVRDGI (125 aa)) are hinge. Residues 263-275 (QEERQRGKDKDGD) are compositionally biased toward basic and acidic residues. Disordered stretches follow at residues 263 to 285 (QEER…APEE) and 300 to 323 (QKSD…NDPV). An NR LBD domain is found at 283 to 516 (PEEMPVDRIL…TFLMEMLEAP (234 aa)). The segment covering 307-317 (EGPGATGGGGS) has biased composition (gly residues).

This sequence belongs to the nuclear hormone receptor family. NR2 subfamily. As to quaternary structure, homodimer (in vitro). Heterodimer with other retinoic acid receptor family members. Binds DNA preferentially as a RAR/RXR heterodimer. Interacts with NR1H3. Interacts with AKAP13. In all tissues tested, including brain, thymus, spleen and liver.

The protein localises to the nucleus. It is found in the cytoplasm. Receptor for retinoic acid. Retinoic acid receptors bind as heterodimers to their target response elements in response to their ligands, all-trans or 9-cis retinoic acid, and regulate gene expression in various biological processes. The RAR/RXR heterodimers bind to the retinoic acid response elements (RARE). The polypeptide is Retinoic acid receptor RXR-beta (Rxrb) (Mus musculus (Mouse)).